We begin with the raw amino-acid sequence, 1005 residues long: Beta-galactosidase (1005 aa).

Glu-455 (proton donor) is an active-site residue. Glu-526 serves as the catalytic Nucleophile.

Belongs to the glycosyl hydrolase 2 family.

The catalysed reaction is Hydrolysis of terminal non-reducing beta-D-galactose residues in beta-D-galactosides.. The sequence is that of Beta-galactosidase (lacZ) from Actinobacillus pleuropneumoniae (Haemophilus pleuropneumoniae).